Here is a 435-residue protein sequence, read N- to C-terminus: Adenylosuccinate synthetase (435 aa).

GTP-binding positions include Gly17–Lys23 and Gly47–Thr49. Catalysis depends on Asp18, which acts as the Proton acceptor. Asp18 and Gly47 together coordinate Mg(2+). Residues Asp18 to Lys21, Asn45 to His48, Thr138, Arg152, Asn232, Thr247, and Arg311 contribute to the IMP site. The Proton donor role is filled by His48. Residue Val307–Arg313 participates in substrate binding. GTP contacts are provided by residues Arg313, Lys339–Asp341, and Gly421–Gly423.

The protein belongs to the adenylosuccinate synthetase family. In terms of assembly, homodimer. It depends on Mg(2+) as a cofactor.

The protein resides in the cytoplasm. It carries out the reaction IMP + L-aspartate + GTP = N(6)-(1,2-dicarboxyethyl)-AMP + GDP + phosphate + 2 H(+). Its pathway is purine metabolism; AMP biosynthesis via de novo pathway; AMP from IMP: step 1/2. Functionally, plays an important role in the de novo pathway and in the salvage pathway of purine nucleotide biosynthesis. Catalyzes the first committed step in the biosynthesis of AMP from IMP. The protein is Adenylosuccinate synthetase of Caenorhabditis briggsae.